Here is a 153-residue protein sequence, read N- to C-terminus: Protein Smg homolog (153 aa).

The protein belongs to the Smg family.

This chain is Protein Smg homolog, found in Neisseria gonorrhoeae (strain ATCC 700825 / FA 1090).